The sequence spans 195 residues: HTH-type transcriptional regulator BetI (195 aa).

In terms of domain architecture, HTH tetR-type spans 8–68; the sequence is EIRRAQLIDA…ATMRHVLRDL (61 aa). The segment at residues 31 to 50 is a DNA-binding region (H-T-H motif); that stretch reads TLASVAQRASISTGIVSHYF.

Its pathway is amine and polyamine biosynthesis; betaine biosynthesis via choline pathway [regulation]. Functionally, repressor involved in the biosynthesis of the osmoprotectant glycine betaine. It represses transcription of the choline transporter BetT and the genes of BetAB involved in the synthesis of glycine betaine. The sequence is that of HTH-type transcriptional regulator BetI from Paraburkholderia phytofirmans (strain DSM 17436 / LMG 22146 / PsJN) (Burkholderia phytofirmans).